The primary structure comprises 88 residues: Small ribosomal subunit protein bS20 (88 aa).

The disordered stretch occupies residues 1-27 (MANSKSAKKRALQSEKRRQHNASRRSM).

The protein belongs to the bacterial ribosomal protein bS20 family.

Functionally, binds directly to 16S ribosomal RNA. This chain is Small ribosomal subunit protein bS20, found in Shewanella loihica (strain ATCC BAA-1088 / PV-4).